We begin with the raw amino-acid sequence, 140 residues long: Large ribosomal subunit protein uL11 (140 aa).

This sequence belongs to the universal ribosomal protein uL11 family. Part of the ribosomal stalk of the 50S ribosomal subunit. Interacts with L10 and the large rRNA to form the base of the stalk. L10 forms an elongated spine to which L12 dimers bind in a sequential fashion forming a multimeric L10(L12)X complex. Post-translationally, one or more lysine residues are methylated.

Functionally, forms part of the ribosomal stalk which helps the ribosome interact with GTP-bound translation factors. This is Large ribosomal subunit protein uL11 from Geobacter metallireducens (strain ATCC 53774 / DSM 7210 / GS-15).